The chain runs to 110 residues: Large ribosomal subunit protein uL22 (110 aa).

Belongs to the universal ribosomal protein uL22 family. As to quaternary structure, part of the 50S ribosomal subunit.

Functionally, this protein binds specifically to 23S rRNA; its binding is stimulated by other ribosomal proteins, e.g. L4, L17, and L20. It is important during the early stages of 50S assembly. It makes multiple contacts with different domains of the 23S rRNA in the assembled 50S subunit and ribosome. The globular domain of the protein is located near the polypeptide exit tunnel on the outside of the subunit, while an extended beta-hairpin is found that lines the wall of the exit tunnel in the center of the 70S ribosome. The polypeptide is Large ribosomal subunit protein uL22 (Shewanella denitrificans (strain OS217 / ATCC BAA-1090 / DSM 15013)).